Consider the following 501-residue polypeptide: NADH-quinone oxidoreductase subunit N (501 aa).

14 consecutive transmembrane segments (helical) span residues 4 to 24 (HLPI…RLLV), 34 to 54 (FVLA…AETL), 80 to 100 (LAGG…VYAG), 112 to 132 (GSFY…CATG), 134 to 154 (LFNL…LIAF), 167 to 187 (LIIG…LYAM), 207 to 227 (PVVI…MALF), 241 to 261 (PAPV…YALY), 278 to 298 (LQVL…MAIA), 314 to 334 (VGYI…GALL), 335 to 355 (HVLS…GVSW), 376 to 396 (MGAF…LGFF), 409 to 429 (GAWV…VYFF), and 463 to 483 (PASM…LGLF).

The protein belongs to the complex I subunit 2 family. As to quaternary structure, NDH-1 is composed of 14 different subunits. Subunits NuoA, H, J, K, L, M, N constitute the membrane sector of the complex.

It is found in the cell membrane. It catalyses the reaction a quinone + NADH + 5 H(+)(in) = a quinol + NAD(+) + 4 H(+)(out). NDH-1 shuttles electrons from NADH, via FMN and iron-sulfur (Fe-S) centers, to quinones in the respiratory chain. The immediate electron acceptor for the enzyme in this species is believed to be a menaquinone. Couples the redox reaction to proton translocation (for every two electrons transferred, four hydrogen ions are translocated across the cytoplasmic membrane), and thus conserves the redox energy in a proton gradient. The polypeptide is NADH-quinone oxidoreductase subunit N (Desulforudis audaxviator (strain MP104C)).